We begin with the raw amino-acid sequence, 868 residues long: Thiol protease/hemagglutinin PrtT (868 aa).

A signal peptide spans 1–27 (MKRIFYTLGLLLLCLPMLQAGPVTRSK). Catalysis depends on residues Cys-184 and His-327.

Belongs to the peptidase C10 family.

Its function is as follows. Appears to be specific for arginine-containing peptide bonds. Possesses hemagglutinin activity. In Porphyromonas gingivalis (Bacteroides gingivalis), this protein is Thiol protease/hemagglutinin PrtT (prtT).